The sequence spans 405 residues: uncharacterized protein (405 aa).

At 1 to 18 the chain is on the cytoplasmic side; the sequence is MPEPVAEPALNGLRLNLR. Residues 19-39 traverse the membrane as a helical segment; the sequence is IVSIVMFNFASYLTIGLPLAV. The Periplasmic segment spans residues 40-46; it reads LPGYVHD. A helical transmembrane segment spans residues 47–67; that stretch reads VMGFSAFWAGLVISLQYFATL. Residues 68 to 84 lie on the Cytoplasmic side of the membrane; sequence LSRPHAGRYADSLGPKK. The helical transmembrane segment at 85–105 threads the bilayer; the sequence is IVVFGLCGCFLSGLGYLTAGL. A topological domain (periplasmic) is located at residue threonine 106. A helical transmembrane segment spans residues 107 to 127; sequence ASLPVISLLLLCLGRVILGIG. At 128–155 the chain is on the cytoplasmic side; sequence QSFAGTGSTLWGVGVVGSLHIGRVISWN. Residues 156 to 176 form a helical membrane-spanning segment; it reads GIVTYGAMAMGAPLGVVFYHW. Residue glycine 177 is a topological domain, periplasmic. The helical transmembrane segment at 178 to 198 threads the bilayer; the sequence is GLQALALIIMGVALVAILLAI. Residues 199–223 are Cytoplasmic-facing; that stretch reads PRPTVKASKGKPLPFRAVLGRVWLY. The helical transmembrane segment at 224–244 threads the bilayer; sequence GMALALASAGFGVIATFITLF. The Periplasmic portion of the chain corresponds to 245–251; that stretch reads YDAKGWD. Residues 252–272 traverse the membrane as a helical segment; it reads GAAFALTLFSCAFVGTRLLFP. Residues 273–282 lie on the Cytoplasmic side of the membrane; it reads NGINRIGGLN. A helical transmembrane segment spans residues 283–303; sequence VAMICFSVEIIGLLLVGVATM. Residues 304-308 are Periplasmic-facing; sequence PWMAK. A helical membrane pass occupies residues 309 to 329; the sequence is IGVLLAGAGFSLVFPALGVVA. The Cytoplasmic segment spans residues 330–343; sequence VKAVPQQNQGAALA. A helical membrane pass occupies residues 344 to 364; sequence TYTVFMDLSLGVTGPLAGLVM. A topological domain (periplasmic) is located at residue serine 365. Residues 366 to 386 traverse the membrane as a helical segment; that stretch reads WAGVPVIYLAAAGLVAIALLL. At 387–405 the chain is on the cytoplasmic side; sequence TWRLKKRPPEHVPEAASSS.

Belongs to the major facilitator superfamily. YhhS family.

The protein localises to the cell inner membrane. Functionally, confers high-level resistance to glyphosate when overexpressed. Overexpression has no effect on intracellular arabinose concentrations. This is an uncharacterized protein from Escherichia coli (strain K12).